Reading from the N-terminus, the 158-residue chain is Heavy metal-associated isoprenylated plant protein 23 (158 aa).

Residues Phe31–Glu94 form the HMA domain. The a metal cation site is built by Cys42 and Cys45. The residue at position 155 (Cys155) is a Cysteine methyl ester. Cys155 carries the S-farnesyl cysteine lipid modification. Positions Ser156 to Met158 are cleaved as a propeptide — removed in mature form.

Belongs to the HIPP family. In terms of assembly, interacts with ZHD11/HB29.

Heavy-metal-binding protein. The polypeptide is Heavy metal-associated isoprenylated plant protein 23 (Arabidopsis thaliana (Mouse-ear cress)).